The sequence spans 104 residues: Transcription and mRNA export factor ENY2 (104 aa).

Residues 1-14 are compositionally biased toward basic and acidic residues; it reads MADYGSDKKSRDNQ. The interval 1 to 22 is disordered; that stretch reads MADYGSDKKSRDNQMRSAINQQ.

Belongs to the ENY2 family. In terms of assembly, component of the nuclear pore complex (NPC)-associated TREX-2 complex (transcription and export complex 2). Component of the SAGA transcription coactivator-HAT complex. Within the SAGA complex, participates in a subcomplex of SAGA called the DUB module (deubiquitination module).

It localises to the nucleus. The protein localises to the nucleoplasm. Involved in mRNA export coupled transcription activation by association with both the TREX-2 and the SAGA complexes. The transcription regulatory histone acetylation (HAT) complex SAGA is a multiprotein complex that activates transcription by remodeling chromatin and mediating histone acetylation and deubiquitination. Within the SAGA complex, participates in a subcomplex that specifically deubiquitinates histones. The SAGA complex is recruited to specific gene promoters by activators, where it is required for transcription. The TREX-2 complex functions in docking export-competent ribonucleoprotein particles (mRNPs) to the nuclear entrance of the nuclear pore complex (nuclear basket). TREX-2 participates in mRNA export and accurate chromatin positioning in the nucleus by tethering genes to the nuclear periphery. The polypeptide is Transcription and mRNA export factor ENY2 (Ciona intestinalis (Transparent sea squirt)).